We begin with the raw amino-acid sequence, 430 residues long: Adenylosuccinate synthetase (430 aa).

Residues 12–18 and 40–42 each bind GTP; these read GDEGKGK and GHT. Catalysis depends on Asp-13, which acts as the Proton acceptor. Residues Asp-13 and Gly-40 each coordinate Mg(2+). IMP is bound by residues 13–16, 38–41, Thr-130, Arg-144, Gln-224, and Thr-239; these read DEGK and NAGH. The active-site Proton donor is the His-41. The disordered stretch occupies residues 277–298; that stretch reads PFPTEQDNETGRKIGERGREFG. The span at 285–296 shows a compositional bias: basic and acidic residues; the sequence is ETGRKIGERGRE. Substrate is bound at residue 299-305; that stretch reads TNTGRPR. Residue Arg-303 coordinates IMP. GTP is bound by residues Arg-305, 331-333, and 413-415; these read KLD and STS.

It belongs to the adenylosuccinate synthetase family. In terms of assembly, homodimer. Requires Mg(2+) as cofactor.

The protein localises to the cytoplasm. It catalyses the reaction IMP + L-aspartate + GTP = N(6)-(1,2-dicarboxyethyl)-AMP + GDP + phosphate + 2 H(+). Its pathway is purine metabolism; AMP biosynthesis via de novo pathway; AMP from IMP: step 1/2. Its function is as follows. Plays an important role in the de novo pathway of purine nucleotide biosynthesis. Catalyzes the first committed step in the biosynthesis of AMP from IMP. The sequence is that of Adenylosuccinate synthetase from Bradyrhizobium sp. (strain BTAi1 / ATCC BAA-1182).